Reading from the N-terminus, the 79-residue chain is Conotoxin Cal9.2a (79 aa).

Residues 1-23 (MNCYLILTVALLLTSAMTGTTTA) form the signal peptide. Positions 24–33 (GQLNKKGVTL) are excised as a propeptide. 3 disulfides stabilise this stretch: C41/C58, C46/C68, and C48/C73.

Expressed by the venom duct.

It localises to the secreted. Functionally, probable neurotoxin with unknown target. Possibly targets ion channels. The sequence is that of Conotoxin Cal9.2a from Californiconus californicus (California cone).